We begin with the raw amino-acid sequence, 79 residues long: uncharacterized protein (79 aa).

The chain crosses the membrane as a helical span at residues 53 to 73; sequence LFFAYMVAYIGFGILSIGMIV.

It localises to the membrane. This is an uncharacterized protein from Escherichia coli O157:H7.